The following is a 351-amino-acid chain: Dihydroorotate dehydrogenase (quinone) (351 aa).

FMN-binding positions include 67-71 and Thr91; that span reads AGFDK. Lys71 contacts substrate. 116–120 is a substrate binding site; sequence NAMGF. Residues Asn145 and Asn178 each contribute to the FMN site. A substrate-binding site is contributed by Asn178. The active-site Nucleophile is Ser181. Residue Asn183 coordinates substrate. Residues Lys214 and Thr242 each contribute to the FMN site. Residue 243–244 coordinates substrate; that stretch reads NT. FMN-binding positions include Gly262, Gly291, and 312 to 313; that span reads YS.

Belongs to the dihydroorotate dehydrogenase family. Type 2 subfamily. As to quaternary structure, monomer. FMN serves as cofactor.

The protein resides in the cell membrane. It catalyses the reaction (S)-dihydroorotate + a quinone = orotate + a quinol. It functions in the pathway pyrimidine metabolism; UMP biosynthesis via de novo pathway; orotate from (S)-dihydroorotate (quinone route): step 1/1. Catalyzes the conversion of dihydroorotate to orotate with quinone as electron acceptor. The protein is Dihydroorotate dehydrogenase (quinone) of Helicobacter pylori (strain G27).